A 164-amino-acid chain; its full sequence is Replication restart protein DnaT (164 aa).

It belongs to the DnaT family. In terms of assembly, homooligomerizes. Interacts with PriB. Component of the replication restart primosome. Primosome assembly occurs via a 'hand-off' mechanism. PriA binds to replication forks, subsequently PriB then DnaT bind; DnaT then displaces ssDNA to generate the helicase loading substrate.

Involved in the restart of stalled replication forks, which reloads the replicative helicase on sites other than the origin of replication. Can function in multiple replication restart pathways. Displaces ssDNA from a PriB-ssDNA complex. Probably forms a spiral filament on ssDNA. This chain is Replication restart protein DnaT, found in Buchnera aphidicola subsp. Acyrthosiphon pisum (strain 5A).